A 190-amino-acid chain; its full sequence is Orotate phosphoribosyltransferase (190 aa).

5-phospho-alpha-D-ribose 1-diphosphate contacts are provided by residues Arg101, Lys102, Lys105, His107, and 128–136 (EDVVTTGGS). Orotate-binding residues include Thr132 and Arg160.

Belongs to the purine/pyrimidine phosphoribosyltransferase family. PyrE subfamily. As to quaternary structure, homodimer. The cofactor is Mg(2+).

The enzyme catalyses orotidine 5'-phosphate + diphosphate = orotate + 5-phospho-alpha-D-ribose 1-diphosphate. The protein operates within pyrimidine metabolism; UMP biosynthesis via de novo pathway; UMP from orotate: step 1/2. Its function is as follows. Catalyzes the transfer of a ribosyl phosphate group from 5-phosphoribose 1-diphosphate to orotate, leading to the formation of orotidine monophosphate (OMP). The sequence is that of Orotate phosphoribosyltransferase from Synechococcus sp. (strain CC9605).